We begin with the raw amino-acid sequence, 1157 residues long: Nitric oxide synthase, inducible (1157 aa).

Positions 23–27 (DINNN) match the DINNN-motif; mediates interaction with SPSB1, SPSB2 and SPSB4 motif. Residues 29–64 (EKLRQASSSPVTQDDPKCPSRSRHRNECSQPLAETA) are disordered. Zn(2+) contacts are provided by cysteine 110 and cysteine 115. Cysteine 200 lines the heme b pocket. 4 residues coordinate L-arginine: glutamine 263, tryptophan 372, tyrosine 373, and glutamate 377. (6R)-L-erythro-5,6,7,8-tetrahydrobiopterin is bound by residues arginine 381, isoleucine 462, tryptophan 463, and phenylalanine 476. Tyrosine 491 is a heme b binding site. The calmodulin-binding stretch occupies residues 515 to 535 (FKVLVKAVLFAAVLMHKTMAA). The Flavodoxin-like domain maps to 539–677 (ATILFATETG…AFRGWAVQTF (139 aa)). FMN is bound by residues threonine 545, glutamate 546, threonine 547, arginine 549, serine 550, serine 591, threonine 592, serine 628, cysteine 635, glutamate 661, and glutamine 665. Positions 730–970 (KYVFSMRLKS…VRSASGFQLP (241 aa)) constitute an FAD-binding FR-type domain. Arginine 750 provides a ligand contact to NADP(+). Residues histidine 772, arginine 906, tyrosine 908, serine 909, threonine 924, and alanine 926 each coordinate FAD. Threonine 929 lines the NADP(+) pocket. 4 residues coordinate FAD: tyrosine 930, valine 943, cysteine 944, and serine 945. NADP(+) contacts are provided by threonine 984, arginine 1017, serine 1046, arginine 1047, lysine 1053, tyrosine 1055, glutamine 1057, and aspartate 1090. The segment at 1138 to 1157 (KEGAVGPPSDPRAPGAHGKS) is disordered.

This sequence belongs to the NOS family. Homodimer. Interacts with NHERF1. Interacts with GAPDH; induced by oxidatively-modified low-densitity lipoprotein (LDL(ox)). Interacts with S100A8 and S100A9 to form the iNOS-S100A8/9 transnitrosylase complex. Interacts with SPSB1, SPSB2 and SPSB4. Interacts with ELOC and CUL5 in the presence of SPSB1 or SPSB2 or SPSB4. Forms a complex with ASL, ASS1 and HSP90AA1; the complex regulates cell-autonomous L-arginine synthesis and citrulline recycling while channeling extracellular L-arginine to nitric oxide synthesis pathway. Requires heme b as cofactor. FAD serves as cofactor. FMN is required as a cofactor. It depends on (6R)-L-erythro-5,6,7,8-tetrahydrobiopterin as a cofactor. Post-translationally, polyubiquitinated; mediated by SPSB1, SPSB2 and SPSB4, leading to proteasomal degradation. In terms of tissue distribution, detected in both stimulated and unstimulated immune cells and macrophages with little or no up-regulation following cellular stimulation with lipopolysaccharides (LPS) or concanavalin A (ConA).

Its subcellular location is the cytoplasm. It localises to the cytosol. The enzyme catalyses 2 L-arginine + 3 NADPH + 4 O2 + H(+) = 2 L-citrulline + 2 nitric oxide + 3 NADP(+) + 4 H2O. With respect to regulation, not stimulated by calcium/calmodulin. Produces nitric oxide (NO) which is a messenger molecule with diverse functions throughout the body. In macrophages, NO mediates tumoricidal and bactericidal actions. Also has nitrosylase activity and mediates cysteine S-nitrosylation of cytoplasmic target proteins such PTGS2/COX2. As component of the iNOS-S100A8/9 transnitrosylase complex involved in the selective inflammatory stimulus-dependent S-nitrosylation of GAPDH implicated in regulation of the GAIT complex activity and probably multiple targets including ANXA5, EZR, MSN and VIM. Involved in inflammation, enhances the synthesis of pro-inflammatory mediators such as IL6 and IL8. The chain is Nitric oxide synthase, inducible (NOS2) from Sus scrofa (Pig).